A 570-amino-acid polypeptide reads, in one-letter code: Urease subunit alpha 1 (570 aa).

Residues 131–570 (GGIDTHVHFI…VPMAQRYFLF (440 aa)) enclose the Urease domain. Residues histidine 136, histidine 138, and lysine 219 each contribute to the Ni(2+) site. An N6-carboxylysine modification is found at lysine 219. Histidine 221 is a substrate binding site. Histidine 248 and histidine 274 together coordinate Ni(2+). Histidine 322 serves as the catalytic Proton donor. A Ni(2+)-binding site is contributed by aspartate 362.

The protein belongs to the metallo-dependent hydrolases superfamily. Urease alpha subunit family. In terms of assembly, heterotrimer of UreA (gamma), UreB (beta) and UreC (alpha) subunits. Three heterotrimers associate to form the active enzyme. Ni cation is required as a cofactor. Carboxylation allows a single lysine to coordinate two nickel ions.

Its subcellular location is the cytoplasm. The enzyme catalyses urea + 2 H2O + H(+) = hydrogencarbonate + 2 NH4(+). It participates in nitrogen metabolism; urea degradation; CO(2) and NH(3) from urea (urease route): step 1/1. Disrupting the ure1 operon causes loss of urease activity, decreased resistance to low pH killing in vitro and decreased pathogen survival when inoculated in BALB/c mice by gavage. The sequence is that of Urease subunit alpha 1 from Brucella suis biovar 1 (strain 1330).